The primary structure comprises 314 residues: Putative S-adenosyl-L-methionine-dependent methyltransferase MMAR_5323 (314 aa).

Residues D132 and 161–162 (DL) each bind S-adenosyl-L-methionine.

Belongs to the UPF0677 family.

Exhibits S-adenosyl-L-methionine-dependent methyltransferase activity. In Mycobacterium marinum (strain ATCC BAA-535 / M), this protein is Putative S-adenosyl-L-methionine-dependent methyltransferase MMAR_5323.